The sequence spans 374 residues: Chaperone protein DnaJ (374 aa).

Residues C5–G70 form the J domain. The segment at G130–Q207 adopts a CR-type zinc-finger fold. Positions 143, 146, 159, 162, 181, 184, 195, and 198 each coordinate Zn(2+). 4 CXXCXGXG motif repeats span residues C143 to G150, C159 to G166, C181 to G188, and C195 to G202.

Belongs to the DnaJ family. In terms of assembly, homodimer. Zn(2+) serves as cofactor.

It is found in the cytoplasm. Its function is as follows. Participates actively in the response to hyperosmotic and heat shock by preventing the aggregation of stress-denatured proteins and by disaggregating proteins, also in an autonomous, DnaK-independent fashion. Unfolded proteins bind initially to DnaJ; upon interaction with the DnaJ-bound protein, DnaK hydrolyzes its bound ATP, resulting in the formation of a stable complex. GrpE releases ADP from DnaK; ATP binding to DnaK triggers the release of the substrate protein, thus completing the reaction cycle. Several rounds of ATP-dependent interactions between DnaJ, DnaK and GrpE are required for fully efficient folding. Also involved, together with DnaK and GrpE, in the DNA replication of plasmids through activation of initiation proteins. This is Chaperone protein DnaJ from Francisella philomiragia subsp. philomiragia (strain ATCC 25017 / CCUG 19701 / FSC 153 / O#319-036).